Here is an 863-residue protein sequence, read N- to C-terminus: Facilitated trehalose transporter Tret1 (863 aa).

Residues 1 to 208 form a disordered region; the sequence is MSGRDNRGAG…RIGFQQQKAT (208 aa). Residues 1 to 398 are Cytoplasmic-facing; sequence MSGRDNRGAG…VYRPTTNPIY (398 aa). Positions 28-46 are enriched in basic and acidic residues; sequence KLKEKLTRAGEELGYHRVE. The span at 47–59 shows a compositional bias: polar residues; it reads SNLSASNTGTSLD. A compositionally biased stretch (low complexity) spans 72–85; that stretch reads AAPQRHPQQQFPHL. 2 stretches are compositionally biased toward polar residues: residues 114-129 and 177-187; these read PPQQIQQQRSALRSSG and KPQQQGNNKAA. Phosphoserine occurs at positions 254, 255, and 256. Residues 286 to 307 form a disordered region; sequence VLQGSSTDSDEEGDDAEHKRLI. Phosphoserine is present on residues S326 and S328. The tract at residues 332–354 is disordered; that stretch reads FLTSRQNFQQQRSISTDSRKSRR. The span at 336–347 shows a compositional bias: polar residues; the sequence is RQNFQQQRSIST. The chain crosses the membrane as a helical span at residues 399–419; it reads IWTQVLAALSVSLGSLVVGFA. Topologically, residues 420–446 are extracellular; it reads SAYTSPALVSMTNTNLTSFVVTPQAAS. Residue N434 is glycosylated (N-linked (GlcNAc...) asparagine). A helical membrane pass occupies residues 447-467; it reads WVGGIMPLAGLAGGIAGGPFI. Over 468–479 the chain is Cytoplasmic; sequence EYLGRRNTILAT. The helical transmembrane segment at 480–500 threads the bilayer; sequence AVPFIISWLLIACAVNVVMVL. Residues 501–503 lie on the Extracellular side of the membrane; sequence CGR. The chain crosses the membrane as a helical span at residues 504 to 524; sequence FLAGFCVGIASLSLPVYLGET. The Cytoplasmic segment spans residues 525-530; it reads VQPEVR. A helical transmembrane segment spans residues 531–551; that stretch reads GTLGLLPTAFGNIGILLCFVA. The Extracellular segment spans residues 552–558; the sequence is GTYMDWS. Residues 559–579 traverse the membrane as a helical segment; the sequence is MLAFLGGTLPVPFLILMFLIP. At 580 to 642 the chain is on the cytoplasmic side; that stretch reads ETPRWYVSRG…ELLKRSNLKP (63 aa). Residues 643–663 form a helical membrane-spanning segment; the sequence is LSISLGLMFFQQLSGINAVIF. The Extracellular portion of the chain corresponds to 664-679; the sequence is YTVQIFQDAGSTIDGN. Residues 680–700 traverse the membrane as a helical segment; the sequence is VCTIIVGVVNFMATFIATVLI. At 701–706 the chain is on the cytoplasmic side; that stretch reads DRAGRK. Residues 707 to 727 traverse the membrane as a helical segment; sequence ILLYVSNVAMILTLFVLGGFF. Residues 728–746 are Extracellular-facing; that stretch reads YCKSTGMDTSNVGWLPLSC. A helical transmembrane segment spans residues 747 to 767; the sequence is FVVYILGFSLGFGPIPWLMMG. The Cytoplasmic segment spans residues 768 to 773; sequence EILPAK. A helical transmembrane segment spans residues 774 to 794; it reads IRGSAASVATAFNWSCTFVVT. Residues 795-807 are Extracellular-facing; that stretch reads KSFQDMIDVMGAH. Residues 808–828 traverse the membrane as a helical segment; it reads GAFWMFGAICFVGLFFVIFYV. Residues 829–863 are Cytoplasmic-facing; sequence PETQGKTLEDIERKMMGRVRRMSSVANIKPLSFNM. 2 positions are modified to phosphoserine: S851 and S852.

The protein belongs to the major facilitator superfamily. Sugar transporter (TC 2.A.1.1) family. Trehalose transporter subfamily.

The protein localises to the cell membrane. Its function is as follows. Low-capacity facilitative transporter for trehalose. Does not transport maltose, sucrose or lactose. Mediates the bidirectional transfer of trehalose. Responsible for the transport of trehalose synthesized in the fat body and the incorporation of trehalose into other tissues that require a carbon source, thereby regulating trehalose levels in the hemolymph. This Drosophila mojavensis (Fruit fly) protein is Facilitated trehalose transporter Tret1.